The primary structure comprises 157 residues: Ribosome maturation factor RimP (157 aa).

This sequence belongs to the RimP family.

Its subcellular location is the cytoplasm. Its function is as follows. Required for maturation of 30S ribosomal subunits. The polypeptide is Ribosome maturation factor RimP (Streptococcus thermophilus (strain ATCC BAA-491 / LMD-9)).